The primary structure comprises 374 residues: MGVKGLNKLIKEHSPNAYKEYQLKNLFGRKVAIDASMCLYQFLISVRQSDGQQLTNDDGETTSHLSGIFYRTIKMVENNIKPVYVFDGKPPVLKGGELEKRLLRREEAQKQKDALKDEGTVEDHLKFEKRLVRVSREQNEEAKKLLELMGIPIVEAPCEAEAQCAELARGGKVYAAASEDMDTLCYEPPQLLRHLTFAEARKIPIDEISYKEAMAGLDMNKEQFVDLCILLGCDYCETIRGVGPVTAYKLIKEHGSLEKIVEWIEKGNTKYTVPENWPYAEARELFLNPEVKKASDISLKWKEPDVEGLIEYMVKGKGFSEDRIRSGAEKLKKGLKGGVQGRLDSFFTVVKKDDGKDKKRKSTAKDTKSKKQKK.

Positions 1–105 (MGVKGLNKLI…GELEKRLLRR (105 aa)) are N-domain. A Mg(2+)-binding site is contributed by Asp-34. 2 residues coordinate DNA: Arg-47 and Arg-71. Positions 87, 159, 161, 180, and 182 each coordinate Mg(2+). The segment at 123 to 254 (DHLKFEKRLV…VTAYKLIKEH (132 aa)) is I-domain. Residue Glu-159 participates in DNA binding. DNA is bound by residues Gly-232 and Asp-234. Position 234 (Asp-234) interacts with Mg(2+). Positions 339–347 (VQGRLDSFF) are interaction with PCNA. A disordered region spans residues 353–374 (DDGKDKKRKSTAKDTKSKKQKK).

This sequence belongs to the XPG/RAD2 endonuclease family. FEN1 subfamily. In terms of assembly, interacts with PCNA. Three molecules of RAD27 bind to one PCNA trimer with each molecule binding to one PCNA monomer. PCNA stimulates the nuclease activity without altering cleavage specificity. It depends on Mg(2+) as a cofactor. In terms of processing, phosphorylated. Phosphorylation upon DNA damage induces relocalization to the nuclear plasma.

It is found in the nucleus. The protein localises to the nucleolus. The protein resides in the nucleoplasm. It localises to the mitochondrion. In terms of biological role, structure-specific nuclease with 5'-flap endonuclease and 5'-3' exonuclease activities involved in DNA replication and repair. During DNA replication, cleaves the 5'-overhanging flap structure that is generated by displacement synthesis when DNA polymerase encounters the 5'-end of a downstream Okazaki fragment. It enters the flap from the 5'-end and then tracks to cleave the flap base, leaving a nick for ligation. Also involved in the long patch base excision repair (LP-BER) pathway, by cleaving within the apurinic/apyrimidinic (AP) site-terminated flap. Acts as a genome stabilization factor that prevents flaps from equilibrating into structures that lead to duplications and deletions. Also possesses 5'-3' exonuclease activity on nicked or gapped double-stranded DNA, and exhibits RNase H activity. Also involved in replication and repair of rDNA and in repairing mitochondrial DNA. In Candida tropicalis (strain ATCC MYA-3404 / T1) (Yeast), this protein is Flap endonuclease 1.